Consider the following 431-residue polypeptide: GDP-L-galactose phosphorylase 2 (431 aa).

The Tele-GMP-histidine intermediate role is filled by His235. Positions 398 to 407 (EEEEEEELEE) are enriched in acidic residues. Positions 398-417 (EEEEEEELEEQNSMNGGSFT) are disordered.

Belongs to the GDPGP1 family. Interacts with TLP1. Expressed in leaves, stems, roots, flowers and siliques.

The protein localises to the cytoplasm. Its subcellular location is the nucleus. The enzyme catalyses GDP-beta-L-galactose + phosphate = beta-L-galactose 1-phosphate + GDP + H(+). It functions in the pathway cofactor biosynthesis; L-ascorbate biosynthesis via GDP-alpha-D-mannose pathway; L-ascorbate from GDP-alpha-D-mannose: step 2/5. Functionally, catalyzes a reaction of the Smirnoff-Wheeler pathway, the major route to ascorbate biosynthesis in plants. Acts as a phosphorylase rather than as a transferase. Uses preferentially GDP-L-galactose and GDP-D-glucose as substrates. Lower activity with GDP-L-fucose, very low activity with GDP-D-mannose, and no activity with UDP-D-glucose, UDP-D-galactose or ADP-D-glucose. Highly specific for inorganic phosphate as the guanylyl acceptor. This chain is GDP-L-galactose phosphorylase 2 (VTC5), found in Arabidopsis thaliana (Mouse-ear cress).